The following is a 459-amino-acid chain: Proton-coupled folate transporter (459 aa).

Met-1 bears the N-acetylmethionine mark. Over 1-25 (MEGRVSPVGSSHRLLTAAVLFRGPV) the chain is Cytoplasmic. The residue at position 6 (Ser-6) is a Phosphoserine. Residues 26–44 (EPLVFLANFALVLQGPLTT) traverse the membrane as a helical segment. Residues 45–82 (QYIWHRISTELGYNGTRHRENCGNQSADPVLKEVETLT) lie on the Extracellular side of the membrane. Residues Asn-58 and Asn-68 are each glycosylated (N-linked (GlcNAc...) asparagine). A disulfide bridge links Cys-66 with Cys-298. The chain crosses the membrane as a helical span at residues 83–108 (SHWTLYMNVGGFLVGLFWSTLLGAWS). The Cytoplasmic portion of the chain corresponds to 109 to 112 (DRVG). Residues 113–135 (RRPLLVLASLGLLLQAVVSIFVV) traverse the membrane as a helical segment. Over 136–140 (QLQLH) the chain is Extracellular. A helical membrane pass occupies residues 141–154 (IGFFVLGRALCALL). The Cytoplasmic segment spans residues 155-177 (GDFNGLLAASFASVADVSSNHSR). Positions 156 and 185 each coordinate H(+). Residues 178–203 (TFRMALLEACIGVAGTLASLLGGHWL) form a helical membrane-spanning segment. Residues 204-208 (RAQGY) lie on the Extracellular side of the membrane. A helical membrane pass occupies residues 209–227 (ANPFWLALAVLIVMTLYAA). At 228 to 266 (FCFGETVKEPKSTRLFTLRHHRSIVQLYVVPAPEKSRMH) the chain is on the cytoplasmic side. The helical transmembrane segment at 267–289 (LALYSLAIFVVVTVHFGAQDILT) threads the bilayer. Position 281 (His-281) interacts with H(+). The Extracellular portion of the chain corresponds to 290 to 302 (LYELSTPLCWDSK). The chain crosses the membrane as a helical span at residues 303–325 (LIGYGSAAQHLPYLTSLLGLRLL). Topologically, residues 326–331 (QFCLAD) are cytoplasmic. A helical membrane pass occupies residues 332-351 (TWVAEIGLAFNILGMVVFAF). The Extracellular portion of the chain corresponds to 352 to 355 (ATIT). Residues 356–376 (PLMFTGYGLLFLSLVTTPVIR) form a helical membrane-spanning segment. The Cytoplasmic portion of the chain corresponds to 377–388 (AKLSKLVSESEQ). Residues 389–414 (GALFSAVACVNSLAMLMASGIFNSLY) form a helical membrane-spanning segment. At 415–422 (PATLNFMK) the chain is on the extracellular side. Residues 423–441 (GFPFLLGAGLLFIPAILIG) form a helical membrane-spanning segment. Residues 442–459 (VLEKVNPHPEFQQFPQNS) lie on the Cytoplasmic side of the membrane.

It belongs to the major facilitator superfamily. SLC46A family. Monomer. In terms of tissue distribution, expressed almost exclusively in the small intestine: expressed at high level in the upper half of the small intestine (duodenum and jejunum), expression decreases downwardly in the subsequent quarter and is undetectable in the last quarter (the lowest ileum). Expressed at low level in other tissues, including liver.

The protein localises to the cell membrane. The protein resides in the apical cell membrane. It localises to the basolateral cell membrane. Its subcellular location is the endosome membrane. It is found in the cytoplasm. It catalyses the reaction folate(in) + H(+)(in) = folate(out) + H(+)(out). It carries out the reaction (6S)-5-methyl-5,6,7,8-tetrahydrofolate(in) + H(+)(in) = (6S)-5-methyl-5,6,7,8-tetrahydrofolate(out) + H(+)(out). The enzyme catalyses methotrexate(in) + H(+)(in) = methotrexate(out) + H(+)(out). The catalysed reaction is pemetrexed(in) + H(+)(in) = pemetrexed(out) + H(+)(out). With respect to regulation, in contrast to human ortholog, not inhibited by myricetin. Its function is as follows. Proton-coupled folate symporter that mediates folate absorption using an H(+) gradient as a driving force. Involved in the intestinal absorption of folates at the brush-border membrane of the proximal jejunum, and the transport from blood to cerebrospinal fluid across the choroid plexus. Functions at acidic pH via alternate outward- and inward-open conformation states. Protonation of residues in the outward open state primes the protein for transport. Binding of folate promotes breaking of salt bridge network and subsequent closure of the extracellular gate, leading to the inward-open state and release of protons and folate. Also able to transport antifolate drugs, such as methotrexate and pemetrexed. Involved in FOLR1-mediated endocytosis by serving as a route of export of folates from acidified endosomes. Also acts as a lower-affinity, pH-independent heme carrier protein and constitutes the main importer of heme in the intestine. Imports heme in the retina and retinal pigment epithelium, in neurons of the hippocampus, in hepatocytes and in the renal epithelial cells. Hence, participates in the trafficking of heme and increases intracellular iron content. The polypeptide is Proton-coupled folate transporter (Rattus norvegicus (Rat)).